Consider the following 702-residue polypeptide: Mesothelin-like protein (702 aa).

Positions 1–35 are cleaved as a signal peptide; the sequence is MAAAVTIPGPRIGALQSSGLTLLLSLAAHCSGPQA. Residues 36-638 are Extracellular-facing; it reads KVLSPGGLDA…AQASTSGSLW (603 aa). N-linked (GlcNAc...) asparagine glycosylation is found at asparagine 122, asparagine 307, and asparagine 424. The segment at 588–611 is disordered; it reads QLGLDASPTSPTGPAHGTRGPPST. Residues 639–668 form a helical membrane-spanning segment; it reads APLGYLPLAMALPCSLLCLLHWGTCILVSV. Topologically, residues 669 to 702 are cytoplasmic; the sequence is DSVASGWLGSQGSGAGKTEVLDSAGRPLGLTGQL.

It belongs to the mesothelin family.

It is found in the membrane. In terms of biological role, may play a role in cellular adhesion. The protein is Mesothelin-like protein (MSLNL) of Homo sapiens (Human).